A 234-amino-acid chain; its full sequence is MTARIGVVTFPGSLDDRDTQRAIKLAGAEPVALWHKDKDLKQVDAVVLPGGFSYGDYLRAGAISRFSPVMETVIEQAKSGMPVLGICNGFQILTEAHLLPGAMLGNNHLHFICRDQKLRVENADTAWTSDYEAGQEIHIPLKNMDGRYVADERTLDMLEAEGRVAFRYVVGGAAADGYGNPNGSLRDIAGITNEAGNVVGLMPHPEHAVEPLIGTGRTDGLPFFTSILKKLVNA.

The 231-residue stretch at 4-234 (RIGVVTFPGS…TSILKKLVNA (231 aa)) folds into the Glutamine amidotransferase type-1 domain. The active-site Nucleophile is C87. Residues H204 and E206 contribute to the active site.

As to quaternary structure, part of the FGAM synthase complex composed of 1 PurL, 1 PurQ and 2 PurS subunits.

The protein resides in the cytoplasm. It carries out the reaction N(2)-formyl-N(1)-(5-phospho-beta-D-ribosyl)glycinamide + L-glutamine + ATP + H2O = 2-formamido-N(1)-(5-O-phospho-beta-D-ribosyl)acetamidine + L-glutamate + ADP + phosphate + H(+). The catalysed reaction is L-glutamine + H2O = L-glutamate + NH4(+). It functions in the pathway purine metabolism; IMP biosynthesis via de novo pathway; 5-amino-1-(5-phospho-D-ribosyl)imidazole from N(2)-formyl-N(1)-(5-phospho-D-ribosyl)glycinamide: step 1/2. Functionally, part of the phosphoribosylformylglycinamidine synthase complex involved in the purines biosynthetic pathway. Catalyzes the ATP-dependent conversion of formylglycinamide ribonucleotide (FGAR) and glutamine to yield formylglycinamidine ribonucleotide (FGAM) and glutamate. The FGAM synthase complex is composed of three subunits. PurQ produces an ammonia molecule by converting glutamine to glutamate. PurL transfers the ammonia molecule to FGAR to form FGAM in an ATP-dependent manner. PurS interacts with PurQ and PurL and is thought to assist in the transfer of the ammonia molecule from PurQ to PurL. The protein is Phosphoribosylformylglycinamidine synthase subunit PurQ of Streptomyces avermitilis (strain ATCC 31267 / DSM 46492 / JCM 5070 / NBRC 14893 / NCIMB 12804 / NRRL 8165 / MA-4680).